The sequence spans 432 residues: Alkaline protease secretion protein AprE (432 aa).

Residues 1–14 (MTRTVKRDENAYAR) are Cytoplasmic-facing. Residues 15–36 (LGWLLVLFGFGGALLWAAFAPL) traverse the membrane as a helical segment. Residues 37-432 (DQGVAVPATV…DRAHVALAEN (396 aa)) are Periplasmic-facing.

Belongs to the membrane fusion protein (MFP) (TC 8.A.1) family.

It localises to the cell inner membrane. Functionally, involved in the secretion of alkaline protease. This chain is Alkaline protease secretion protein AprE (aprE), found in Pseudomonas aeruginosa (strain ATCC 15692 / DSM 22644 / CIP 104116 / JCM 14847 / LMG 12228 / 1C / PRS 101 / PAO1).